A 418-amino-acid chain; its full sequence is Glutamyl-tRNA reductase (418 aa).

Substrate-binding positions include 49 to 52 (TCNR), serine 105, 110 to 112 (EPQ), and glutamine 116. Residue cysteine 50 is the Nucleophile of the active site. An NADP(+)-binding site is contributed by 185-190 (GAGEMI).

The protein belongs to the glutamyl-tRNA reductase family. Homodimer.

The catalysed reaction is (S)-4-amino-5-oxopentanoate + tRNA(Glu) + NADP(+) = L-glutamyl-tRNA(Glu) + NADPH + H(+). Its pathway is porphyrin-containing compound metabolism; protoporphyrin-IX biosynthesis; 5-aminolevulinate from L-glutamyl-tRNA(Glu): step 1/2. Catalyzes the NADPH-dependent reduction of glutamyl-tRNA(Glu) to glutamate 1-semialdehyde (GSA). The protein is Glutamyl-tRNA reductase of Aromatoleum aromaticum (strain DSM 19018 / LMG 30748 / EbN1) (Azoarcus sp. (strain EbN1)).